The primary structure comprises 410 residues: MSAHQDVKKVVLAYSGGLDTSVILRWLQKTYNCEVVTFTADLGQGEELEPARKKAEMFGVKEIFVEDLRETFVKDFVFPMFRANTLYEGQYLLGTSIARPLIAQRQIEIAEAVGADAVAHGATGKGNDQVRFELGYYSLKPDVKVIAPWREWDLTSRTKLLAFAEENQIPVTKDKRGEAPFSVDANLLHSSSEGKLLEDPSIGAEEIVFQRTISPEAAPDVATEITIDFVSGDPVAINGVEMTPATLLTRLNELGRDNGIGRLDIVENRFVGMKSRGIYETPGGTILLAAHRSIESITLDREAAHLKDSIMPRYAEIIYNGFWFSPERRMLQALIDTSQHSVTGRVRMRLYKGNVTCVGRESPHSLYDTRVVTFEDDEGAYNQQDAQGFIKLNALRLRLGGQIGRRGGTL.

ATP is bound by residues 13 to 21 (AYSGGLDTS) and Ala40. Residues Tyr91 and Ser96 each contribute to the L-citrulline site. Gly121 provides a ligand contact to ATP. Positions 123, 127, and 128 each coordinate L-aspartate. Asn127 is a binding site for L-citrulline. 5 residues coordinate L-citrulline: Arg131, Ser182, Ser191, Glu267, and Tyr279.

This sequence belongs to the argininosuccinate synthase family. Type 1 subfamily. As to quaternary structure, homotetramer.

The protein localises to the cytoplasm. The enzyme catalyses L-citrulline + L-aspartate + ATP = 2-(N(omega)-L-arginino)succinate + AMP + diphosphate + H(+). The protein operates within amino-acid biosynthesis; L-arginine biosynthesis; L-arginine from L-ornithine and carbamoyl phosphate: step 2/3. The chain is Argininosuccinate synthase from Gluconobacter oxydans (strain 621H) (Gluconobacter suboxydans).